The chain runs to 159 residues: NAD(P)H-quinone oxidoreductase subunit J, chloroplastic (159 aa).

This sequence belongs to the complex I 30 kDa subunit family. As to quaternary structure, NDH is composed of at least 16 different subunits, 5 of which are encoded in the nucleus.

The protein localises to the plastid. Its subcellular location is the chloroplast thylakoid membrane. It catalyses the reaction a plastoquinone + NADH + (n+1) H(+)(in) = a plastoquinol + NAD(+) + n H(+)(out). It carries out the reaction a plastoquinone + NADPH + (n+1) H(+)(in) = a plastoquinol + NADP(+) + n H(+)(out). Functionally, NDH shuttles electrons from NAD(P)H:plastoquinone, via FMN and iron-sulfur (Fe-S) centers, to quinones in the photosynthetic chain and possibly in a chloroplast respiratory chain. The immediate electron acceptor for the enzyme in this species is believed to be plastoquinone. Couples the redox reaction to proton translocation, and thus conserves the redox energy in a proton gradient. The protein is NAD(P)H-quinone oxidoreductase subunit J, chloroplastic of Populus trichocarpa (Western balsam poplar).